The following is a 128-amino-acid chain: Glycine cleavage system H protein (128 aa).

Residues Val24–Arg106 enclose the Lipoyl-binding domain. Lys65 carries the post-translational modification N6-lipoyllysine.

Belongs to the GcvH family. The glycine cleavage system is composed of four proteins: P, T, L and H. The cofactor is (R)-lipoate.

The glycine cleavage system catalyzes the degradation of glycine. The H protein shuttles the methylamine group of glycine from the P protein to the T protein. This Edwardsiella ictaluri (strain 93-146) protein is Glycine cleavage system H protein.